Consider the following 319-residue polypeptide: Homoserine O-acetyltransferase (319 aa).

The Acyl-thioester intermediate role is filled by Cys-142. Residues Lys-163 and Ser-192 each contribute to the substrate site. The active-site Proton acceptor is His-235. The active site involves Glu-237. Arg-249 serves as a coordination point for substrate.

The protein belongs to the MetA family.

The protein localises to the cytoplasm. The catalysed reaction is L-homoserine + acetyl-CoA = O-acetyl-L-homoserine + CoA. The protein operates within amino-acid biosynthesis; L-methionine biosynthesis via de novo pathway; O-acetyl-L-homoserine from L-homoserine: step 1/1. Functionally, transfers an acetyl group from acetyl-CoA to L-homoserine, forming acetyl-L-homoserine. In Lactococcus lactis subsp. cremoris (strain MG1363), this protein is Homoserine O-acetyltransferase.